The primary structure comprises 387 residues: Putative acid--amine ligase YjfC (387 aa).

An ATP-binding site is contributed by 101-103 (RMD). Positions 103, 116, and 118 each coordinate Mg(2+). Residues Lys265, Lys302, Gly309, Gln337, and 372–374 (LIT) each bind ATP.

This sequence belongs to the glutathionylspermidine synthase preATP-grasp family.

May be a ligase forming an amide bond. Shows ATPase activity. Despite its similarity to the C-terminal synthetase domain of Gss, is not a glutathionylspermidine (Gsp) synthetase. Cannot synthesize Gsp, glutathione (GSH), or GSH intermediates, from GSH and spermidine, cysteine and glutamate, gamma-glutamylcysteine and spermidine, and gamma-glutamylcysteine and glycine. Does not bind to Gsp. This chain is Putative acid--amine ligase YjfC (yjfC), found in Escherichia coli (strain K12).